A 198-amino-acid chain; its full sequence is ATP synthase subunit delta (198 aa).

The protein belongs to the ATPase delta chain family. As to quaternary structure, F-type ATPases have 2 components, F(1) - the catalytic core - and F(0) - the membrane proton channel. F(1) has five subunits: alpha(3), beta(3), gamma(1), delta(1), epsilon(1). F(0) has three main subunits: a(1), b(2) and c(10-14). The alpha and beta chains form an alternating ring which encloses part of the gamma chain. F(1) is attached to F(0) by a central stalk formed by the gamma and epsilon chains, while a peripheral stalk is formed by the delta and b chains.

Its subcellular location is the cell inner membrane. F(1)F(0) ATP synthase produces ATP from ADP in the presence of a proton or sodium gradient. F-type ATPases consist of two structural domains, F(1) containing the extramembraneous catalytic core and F(0) containing the membrane proton channel, linked together by a central stalk and a peripheral stalk. During catalysis, ATP synthesis in the catalytic domain of F(1) is coupled via a rotary mechanism of the central stalk subunits to proton translocation. Functionally, this protein is part of the stalk that links CF(0) to CF(1). It either transmits conformational changes from CF(0) to CF(1) or is implicated in proton conduction. The polypeptide is ATP synthase subunit delta (Gluconacetobacter diazotrophicus (strain ATCC 49037 / DSM 5601 / CCUG 37298 / CIP 103539 / LMG 7603 / PAl5)).